We begin with the raw amino-acid sequence, 268 residues long: Methionine aminopeptidase (268 aa).

Position 79 (His-79) interacts with substrate. A divalent metal cation is bound by residues Asp-97, Asp-108, and His-172. His-179 provides a ligand contact to substrate. 2 residues coordinate a divalent metal cation: Glu-205 and Glu-236.

The protein belongs to the peptidase M24A family. Methionine aminopeptidase type 1 subfamily. In terms of assembly, monomer. It depends on Co(2+) as a cofactor. Requires Zn(2+) as cofactor. The cofactor is Mn(2+). Fe(2+) serves as cofactor.

It carries out the reaction Release of N-terminal amino acids, preferentially methionine, from peptides and arylamides.. In terms of biological role, removes the N-terminal methionine from nascent proteins. The N-terminal methionine is often cleaved when the second residue in the primary sequence is small and uncharged (Met-Ala-, Cys, Gly, Pro, Ser, Thr, or Val). Requires deformylation of the N(alpha)-formylated initiator methionine before it can be hydrolyzed. The sequence is that of Methionine aminopeptidase from Haemophilus influenzae (strain ATCC 51907 / DSM 11121 / KW20 / Rd).